A 110-amino-acid polypeptide reads, in one-letter code: Large ribosomal subunit protein uL24 (110 aa).

Belongs to the universal ribosomal protein uL24 family. In terms of assembly, part of the 50S ribosomal subunit.

In terms of biological role, one of two assembly initiator proteins, it binds directly to the 5'-end of the 23S rRNA, where it nucleates assembly of the 50S subunit. Its function is as follows. One of the proteins that surrounds the polypeptide exit tunnel on the outside of the subunit. This Roseiflexus castenholzii (strain DSM 13941 / HLO8) protein is Large ribosomal subunit protein uL24.